The primary structure comprises 365 residues: Mannonate dehydratase 1 (365 aa).

This sequence belongs to the mannonate dehydratase family. It depends on Fe(2+) as a cofactor. Mn(2+) serves as cofactor.

The catalysed reaction is D-mannonate = 2-dehydro-3-deoxy-D-gluconate + H2O. The protein operates within carbohydrate metabolism; pentose and glucuronate interconversion. Functionally, catalyzes the dehydration of D-mannonate. The protein is Mannonate dehydratase 1 of Bacillus licheniformis (strain ATCC 14580 / DSM 13 / JCM 2505 / CCUG 7422 / NBRC 12200 / NCIMB 9375 / NCTC 10341 / NRRL NRS-1264 / Gibson 46).